Here is a 94-residue protein sequence, read N- to C-terminus: Large ribosomal subunit protein bL27 (94 aa).

The interval methionine 1–arginine 25 is disordered.

Belongs to the bacterial ribosomal protein bL27 family.

This is Large ribosomal subunit protein bL27 from Gloeothece citriformis (strain PCC 7424) (Cyanothece sp. (strain PCC 7424)).